Reading from the N-terminus, the 152-residue chain is Transcriptional repressor NrdR (152 aa).

Residues 3–34 fold into a zinc finger; it reads CPFCHNEQSRVIDSRVIDSGTSIRRRRECAAC. The 91-residue stretch at 46–136 folds into the ATP-cone domain; that stretch reads LSVVKRNGLA…VYKSFESADD (91 aa).

It belongs to the NrdR family. Zn(2+) serves as cofactor.

Functionally, negatively regulates transcription of bacterial ribonucleotide reductase nrd genes and operons by binding to NrdR-boxes. The polypeptide is Transcriptional repressor NrdR (Corynebacterium aurimucosum (strain ATCC 700975 / DSM 44827 / CIP 107346 / CN-1) (Corynebacterium nigricans)).